Reading from the N-terminus, the 598-residue chain is uncharacterized protein (598 aa).

Residues 1–23 (MSHEGSRQARDRGVTRSKAEKAR) are compositionally biased toward basic and acidic residues. 3 disordered regions span residues 1–32 (MSHEGSRQARDRGVTRSKAEKARPPTQPVPQV), 151–190 (FHNEEPGNPDQFLLGSSWDKESQKPTQPSEPSAEPKVTPR), and 222–241 (PSKESLRSTAEGERVYSPQS). Basic and acidic residues predominate over residues 225-235 (ESLRSTAEGER). Phosphoserine occurs at positions 238 and 242. 2 disordered regions span residues 366–396 (RRSQAGTATSACESQALSSRAPSKPHVSSPR) and 551–571 (AEEGTPQAPEQQPIQTGVSKP). Composition is skewed to polar residues over residues 369–386 (QAGTATSACESQALSSRA) and 558–569 (APEQQPIQTGVS).

This is an uncharacterized protein from Mus musculus (Mouse).